We begin with the raw amino-acid sequence, 227 residues long: UPF0173 metal-dependent hydrolase BCE_4747 (227 aa).

The protein belongs to the UPF0173 family.

The chain is UPF0173 metal-dependent hydrolase BCE_4747 from Bacillus cereus (strain ATCC 10987 / NRS 248).